We begin with the raw amino-acid sequence, 344 residues long: Uroporphyrinogen decarboxylase (344 aa).

Substrate-binding positions include 23 to 27 (RQAGR), D73, Y149, T204, and H321.

Belongs to the uroporphyrinogen decarboxylase family. In terms of assembly, homodimer.

The protein resides in the cytoplasm. The catalysed reaction is uroporphyrinogen III + 4 H(+) = coproporphyrinogen III + 4 CO2. It participates in porphyrin-containing compound metabolism; protoporphyrin-IX biosynthesis; coproporphyrinogen-III from 5-aminolevulinate: step 4/4. Functionally, catalyzes the decarboxylation of four acetate groups of uroporphyrinogen-III to yield coproporphyrinogen-III. The chain is Uroporphyrinogen decarboxylase from Francisella tularensis subsp. tularensis (strain FSC 198).